A 127-amino-acid polypeptide reads, in one-letter code: Ribosome-binding factor A (127 aa).

The protein belongs to the RbfA family. As to quaternary structure, monomer. Binds 30S ribosomal subunits, but not 50S ribosomal subunits or 70S ribosomes.

It localises to the cytoplasm. One of several proteins that assist in the late maturation steps of the functional core of the 30S ribosomal subunit. Associates with free 30S ribosomal subunits (but not with 30S subunits that are part of 70S ribosomes or polysomes). Required for efficient processing of 16S rRNA. May interact with the 5'-terminal helix region of 16S rRNA. This chain is Ribosome-binding factor A, found in Stenotrophomonas maltophilia (strain R551-3).